Consider the following 160-residue polypeptide: MTQDISLSFYKPEHLPELQSFTLTNDDKRFTSLPKEVLSQALGIQDRYPVVILKDDLPVGFFILHASKETLASYSNNPFALLLSSLSLTAVHHGKGYAKKAMLLLPAFVSGYFPWCDEIILAVNHLNIRAKHLYMKSGFLDKGRRRIGPLGEQLILHHFL.

An N-acetyltransferase domain is found at 5-160 (ISLSFYKPEH…GEQLILHHFL (156 aa)).

This is an uncharacterized protein from Bacillus subtilis (strain 168).